A 147-amino-acid polypeptide reads, in one-letter code: Arginine repressor (147 aa).

This sequence belongs to the ArgR family.

It is found in the cytoplasm. Its pathway is amino-acid biosynthesis; L-arginine biosynthesis [regulation]. Its function is as follows. Regulates arginine biosynthesis genes. The sequence is that of Arginine repressor from Chlamydia felis (strain Fe/C-56) (Chlamydophila felis).